Here is a 287-residue protein sequence, read N- to C-terminus: Large ribosomal subunit protein uL2 (287 aa).

The tract at residues 214–287 (LGRRPEVRGS…SKRGRGGRDA (74 aa)) is disordered. Basic residues predominate over residues 271-287 (QRRRRKSSKRGRGGRDA).

This sequence belongs to the universal ribosomal protein uL2 family. Part of the 50S ribosomal subunit. Forms a bridge to the 30S subunit in the 70S ribosome.

In terms of biological role, one of the primary rRNA binding proteins. Required for association of the 30S and 50S subunits to form the 70S ribosome, for tRNA binding and peptide bond formation. It has been suggested to have peptidyltransferase activity; this is somewhat controversial. Makes several contacts with the 16S rRNA in the 70S ribosome. The polypeptide is Large ribosomal subunit protein uL2 (Synechococcus elongatus (strain ATCC 33912 / PCC 7942 / FACHB-805) (Anacystis nidulans R2)).